Reading from the N-terminus, the 438-residue chain is Thymidine phosphorylase (438 aa).

It belongs to the thymidine/pyrimidine-nucleoside phosphorylase family. Homodimer.

It catalyses the reaction thymidine + phosphate = 2-deoxy-alpha-D-ribose 1-phosphate + thymine. It functions in the pathway pyrimidine metabolism; dTMP biosynthesis via salvage pathway; dTMP from thymine: step 1/2. The enzymes which catalyze the reversible phosphorolysis of pyrimidine nucleosides are involved in the degradation of these compounds and in their utilization as carbon and energy sources, or in the rescue of pyrimidine bases for nucleotide synthesis. The polypeptide is Thymidine phosphorylase (Colwellia psychrerythraea (strain 34H / ATCC BAA-681) (Vibrio psychroerythus)).